We begin with the raw amino-acid sequence, 613 residues long: 4-hydroxy-3-methylbut-2-en-1-yl diphosphate synthase (flavodoxin) (613 aa).

The [4Fe-4S] cluster site is built by cysteine 514, cysteine 517, cysteine 548, and glutamate 555.

The protein belongs to the IspG family. [4Fe-4S] cluster is required as a cofactor.

The enzyme catalyses (2E)-4-hydroxy-3-methylbut-2-enyl diphosphate + oxidized [flavodoxin] + H2O + 2 H(+) = 2-C-methyl-D-erythritol 2,4-cyclic diphosphate + reduced [flavodoxin]. The protein operates within isoprenoid biosynthesis; isopentenyl diphosphate biosynthesis via DXP pathway; isopentenyl diphosphate from 1-deoxy-D-xylulose 5-phosphate: step 5/6. Its function is as follows. Converts 2C-methyl-D-erythritol 2,4-cyclodiphosphate (ME-2,4cPP) into 1-hydroxy-2-methyl-2-(E)-butenyl 4-diphosphate. The polypeptide is 4-hydroxy-3-methylbut-2-en-1-yl diphosphate synthase (flavodoxin) (Chlamydia pneumoniae (Chlamydophila pneumoniae)).